The primary structure comprises 577 residues: Mitochondrial-processing peptidase subunit alpha (577 aa).

The N-terminal 35 residues, 1–35 (MLNRFRPARLVAQSSRCLPLTRARAGPLPVNNART), are a transit peptide targeting the mitochondrion. The interval 259-301 (SDAPGLSRTGSETSVDSLVSESSEASSESSSSSSDSSESSGGL) is disordered. The span at 269 to 301 (SETSVDSLVSESSEASSESSSSSSDSSESSGGL) shows a compositional bias: low complexity.

The protein belongs to the peptidase M16 family. As to quaternary structure, heterodimer of mpp (alpha) and pep (beta) subunits, forming the mitochondrial processing protease (MPP) in which mpp is involved in substrate recognition and binding and pep is the catalytic subunit.

The protein localises to the mitochondrion matrix. Substrate recognition and binding subunit of the essential mitochondrial processing protease (MPP), which cleaves the mitochondrial sequence off newly imported precursors proteins. This Neurospora crassa (strain ATCC 24698 / 74-OR23-1A / CBS 708.71 / DSM 1257 / FGSC 987) protein is Mitochondrial-processing peptidase subunit alpha.